A 407-amino-acid polypeptide reads, in one-letter code: Tryptophan synthase beta chain (407 aa).

Lys-91 is modified (N6-(pyridoxal phosphate)lysine).

It belongs to the TrpB family. In terms of assembly, tetramer of two alpha and two beta chains. It depends on pyridoxal 5'-phosphate as a cofactor.

The catalysed reaction is (1S,2R)-1-C-(indol-3-yl)glycerol 3-phosphate + L-serine = D-glyceraldehyde 3-phosphate + L-tryptophan + H2O. The protein operates within amino-acid biosynthesis; L-tryptophan biosynthesis; L-tryptophan from chorismate: step 5/5. Its function is as follows. The beta subunit is responsible for the synthesis of L-tryptophan from indole and L-serine. This chain is Tryptophan synthase beta chain, found in Streptococcus pneumoniae (strain Taiwan19F-14).